Consider the following 93-residue polypeptide: Putative pterin-4-alpha-carbinolamine dehydratase (93 aa).

It belongs to the pterin-4-alpha-carbinolamine dehydratase family.

It catalyses the reaction (4aS,6R)-4a-hydroxy-L-erythro-5,6,7,8-tetrahydrobiopterin = (6R)-L-erythro-6,7-dihydrobiopterin + H2O. The protein is Putative pterin-4-alpha-carbinolamine dehydratase of Nostoc punctiforme (strain ATCC 29133 / PCC 73102).